Reading from the N-terminus, the 95-residue chain is Cell division protein FtsB (95 aa).

Residues 1 to 3 are Cytoplasmic-facing; sequence MRL. A helical membrane pass occupies residues 4 to 21; that stretch reads FILILSAILLLFQYDLWF. Residues 22 to 95 lie on the Periplasmic side of the membrane; sequence GKNGYLDYKE…RIAKENKDNR (74 aa). A coiled-coil region spans residues 28–62; sequence DYKETAEEIAMHKAENTKLSQRNQVVAAEIRDLKD.

It belongs to the FtsB family. As to quaternary structure, part of a complex composed of FtsB, FtsL and FtsQ.

It localises to the cell inner membrane. In terms of biological role, essential cell division protein. May link together the upstream cell division proteins, which are predominantly cytoplasmic, with the downstream cell division proteins, which are predominantly periplasmic. The protein is Cell division protein FtsB of Mannheimia succiniciproducens (strain KCTC 0769BP / MBEL55E).